The following is a 38-amino-acid chain: Large ribosomal subunit protein bL36 (38 aa).

This sequence belongs to the bacterial ribosomal protein bL36 family.

The polypeptide is Large ribosomal subunit protein bL36 (Chlorobium limicola (strain DSM 245 / NBRC 103803 / 6330)).